The sequence spans 425 residues: MKYLNCFISTGLAAFFLVNSTSVLAADCSSDLTSGISTKRIYYVAPNGNSSNNGSSFNAPMSFSAAMAAVNPGELILLKPGTYTIPYTQGKGNTITFNKSGKDGAPIYVAAANCGRAVFDFSFPDSQWVQASYGFYVTGDYWYFKGVEVTRAGYQGAYVIGSHNTFENTAFHHNRNTGLEINNGGSYNTVINSDAYRNYDPKKNGSMADGFGPKQKQGPGNRFVGCRAWENSDDGFDLFDSPQKVVIENSWAFRNGINYWNDSAFAGNGNGFKLGGNQAVGNHRITRSVAFGNVSKGFDQNNNAGGVTVINNTSYKNGINYGFGSNVQSGQKHYFRNNVSLSASVTVSNADAKSNSWDTGPAASASDFVSLDTSLATVSRDNDGTLPETSLFRLSANSKLINAGTKESNISYSGSAPDLGAFERN.

Positions 1-25 are cleaved as a signal peptide; that stretch reads MKYLNCFISTGLAAFFLVNSTSVLA. The cysteines at positions 28 and 114 are disulfide-linked. Residues Asp209, Asp233, Asp234, and Asp237 each contribute to the Ca(2+) site. The active-site Proton acceptor is Lys273. Ca(2+)-binding residues include Asn402, Ser413, Ala416, Asp418, and Glu423.

It belongs to the polysaccharide lyase 9 family. The cofactor is Ca(2+).

It localises to the secreted. The enzyme catalyses Eliminative cleavage of (1-&gt;4)-alpha-D-galacturonan to give oligosaccharides with 4-deoxy-alpha-D-galact-4-enuronosyl groups at their non-reducing ends.. Its pathway is glycan metabolism; pectin degradation; 2-dehydro-3-deoxy-D-gluconate from pectin: step 2/5. Presents an endo-cleaving activity on polygalacturonate or partially methylated pectin. Is effective in the maceration of plant tissue, and has an important role in soft-rot disease. Is 280-fold less active against polygalacturonate than the major pectate lyase PelB. When assayed on polygalacturonate, PelL releases oligogalacturonates of different sizes; upon prolonged incubation, PelL degrades the primary products to unsaturated tetramer and pentamer in addition to unsaturated dimer and trimer. When assayed on oligogalacturonates (degrees of polymerization of 2 to 8), it preferentially forms unsaturated tetramer, and displays the highest activity on the octamer. This is Pectate lyase L (pelL) from Dickeya dadantii (strain 3937) (Erwinia chrysanthemi (strain 3937)).